A 423-amino-acid chain; its full sequence is 3-phosphoshikimate 1-carboxyvinyltransferase (423 aa).

Positions 28, 29, and 33 each coordinate 3-phosphoshikimate. Lys28 is a binding site for phosphoenolpyruvate. Phosphoenolpyruvate is bound by residues Gly96 and Arg124. 3-phosphoshikimate-binding residues include Ser169, Ser170, Gln171, Ser198, Glu312, and His339. Gln171 serves as a coordination point for phosphoenolpyruvate. Glu312 (proton acceptor) is an active-site residue. 3 residues coordinate phosphoenolpyruvate: Arg343, Arg384, and Lys409.

This sequence belongs to the EPSP synthase family. As to quaternary structure, monomer.

The protein resides in the cytoplasm. It carries out the reaction 3-phosphoshikimate + phosphoenolpyruvate = 5-O-(1-carboxyvinyl)-3-phosphoshikimate + phosphate. It participates in metabolic intermediate biosynthesis; chorismate biosynthesis; chorismate from D-erythrose 4-phosphate and phosphoenolpyruvate: step 6/7. Functionally, catalyzes the transfer of the enolpyruvyl moiety of phosphoenolpyruvate (PEP) to the 5-hydroxyl of shikimate-3-phosphate (S3P) to produce enolpyruvyl shikimate-3-phosphate and inorganic phosphate. The sequence is that of 3-phosphoshikimate 1-carboxyvinyltransferase from Acidothermus cellulolyticus (strain ATCC 43068 / DSM 8971 / 11B).